The following is a 161-amino-acid chain: Ethylene-responsive transcription factor ERF070 (161 aa).

Residues 1–35 (MKRIIRISFTDAEATDSSSDEDTEERGGASQTRRR) form a disordered region. The segment at residues 78 to 140 (KYRGVRQRPW…IGPHAPTNFG (63 aa)) is a DNA-binding region (AP2/ERF).

The protein belongs to the AP2/ERF transcription factor family. ERF subfamily.

The protein resides in the nucleus. Probably acts as a transcriptional activator. Binds to the GCC-box pathogenesis-related promoter element. May be involved in the regulation of gene expression by stress factors and by components of stress signal transduction pathways. This Arabidopsis thaliana (Mouse-ear cress) protein is Ethylene-responsive transcription factor ERF070 (ERF070).